Reading from the N-terminus, the 912-residue chain is Phosphoenolpyruvate carboxylase (912 aa).

Catalysis depends on residues His-138 and Lys-575.

Belongs to the PEPCase type 1 family. Requires Mg(2+) as cofactor.

The catalysed reaction is oxaloacetate + phosphate = phosphoenolpyruvate + hydrogencarbonate. Its function is as follows. Forms oxaloacetate, a four-carbon dicarboxylic acid source for the tricarboxylic acid cycle. This is Phosphoenolpyruvate carboxylase from Lactobacillus acidophilus (strain ATCC 700396 / NCK56 / N2 / NCFM).